Reading from the N-terminus, the 519-residue chain is Glutamate--cysteine ligase (519 aa).

This sequence belongs to the glutamate--cysteine ligase type 1 family. Type 1 subfamily.

It catalyses the reaction L-cysteine + L-glutamate + ATP = gamma-L-glutamyl-L-cysteine + ADP + phosphate + H(+). Its pathway is sulfur metabolism; glutathione biosynthesis; glutathione from L-cysteine and L-glutamate: step 1/2. This is Glutamate--cysteine ligase from Yersinia enterocolitica serotype O:8 / biotype 1B (strain NCTC 13174 / 8081).